The chain runs to 133 residues: Homeobox protein HD-5 (133 aa).

Positions 34-93 (SKRSRLKLSGQQIDVLESNFKIDSHPNSATKSLLSNALSIPLKNIQIWFQNRRAKEKTAR) form a DNA-binding region, homeobox. Residues 86–109 (RAKEKTARDGGRRRSGNAEIEDGE) are disordered.

Its subcellular location is the nucleus. The chain is Homeobox protein HD-5 (HD-5) from Encephalitozoon cuniculi (strain GB-M1) (Microsporidian parasite).